We begin with the raw amino-acid sequence, 498 residues long: Sugar transport protein 2 (498 aa).

Residues 1-22 lie on the Cytoplasmic side of the membrane; it reads MAVGSMNVEEGTKAFPAKLTGQ. 12 consecutive transmembrane segments (helical) span residues 23–43, 80–100, 117–137, 140–160, 167–187, 200–220, 288–308, 320–340, 348–368, 381–401, 421–441, and 450–470; these read VFLC…DIGI, LLQL…FISS, IFFL…MLIG, ILLG…ISEI, GGLN…ASYV, YSLG…FFIH, LQFF…PVLF, ISTV…LLVV, LLME…GILL, AVPL…AWSW, GYFC…QFFL, and LLFF…VFFL. Residues 471 to 498 lie on the Cytoplasmic side of the membrane; it reads PETKGVPIEEMAEKRWKTHPRWKKYFKD.

This sequence belongs to the major facilitator superfamily. Sugar transporter (TC 2.A.1.1) family. As to expression, pollen specific (at protein level).

The protein resides in the membrane. In terms of biological role, mediates an active uptake of hexoses, probably by sugar/hydrogen symport. Can transport glucose, 3-O-methylglucose, xylose, mannose, fructose and galactose. This Arabidopsis thaliana (Mouse-ear cress) protein is Sugar transport protein 2 (STP2).